Reading from the N-terminus, the 713-residue chain is Undecaprenyl-diphosphooligosaccharide--protein glycotransferase (713 aa).

The Cytoplasmic segment spans residues 1 to 11; the sequence is MLKKEYLKNPY. Residues 12–35 form a helical membrane-spanning segment; the sequence is LVLFAMIILAYVFSVLCRFYWIWW. The Periplasmic portion of the chain corresponds to 36 to 96; it reads ASEFNEYFFN…YWLYKITPFS (61 aa). The DXD motif 1 signature appears at 52 to 54; the sequence is SND. D54 provides a ligand contact to Mn(2+). The chain crosses the membrane as a helical span at residues 97–122; it reads FESIILYMSTFLSSLVVIPIILLANE. Over 123-125 the chain is Cytoplasmic; sequence YKR. Residues 126–144 traverse the membrane as a helical segment; sequence PLMGFVAALLASVANSYYN. The Periplasmic portion of the chain corresponds to 145 to 152; the sequence is RTMSGYYD. D152 contributes to the Mn(2+) binding site. The DXD motif 2 motif lies at 152–154; it reads DTD. A helical membrane pass occupies residues 153–174; the sequence is TDMLVIVLPMFILFFMVRMILK. At 175–176 the chain is on the cytoplasmic side; it reads KD. Residues 177-192 traverse the membrane as a helical segment; that stretch reads FFSLIALPLFIGIYLW. The Periplasmic segment spans residues 193-197; it reads WYPSS. 194–196 serves as a coordination point for [alpha-D-GalNAc-(1-&gt;4)]2-[beta-D-Glc-(1-&gt;3)]-[alpha-D-GalNAc-(1-&gt;4)]2-alpha-D-GalNAc-(1-&gt;3)-alpha-D-diNAcBac-tri-trans,hepta-cis-undecaprenyl diphosphate; the sequence is YPS. A helical transmembrane segment spans residues 198–215; the sequence is YTLNVALIGLFLIYTLIF. At 216–220 the chain is on the cytoplasmic side; it reads HRKEK. Residues 221-233 form a helical membrane-spanning segment; sequence IFYIAVILSSLTL. Topologically, residues 234–237 are periplasmic; that stretch reads SNIA. A helical membrane pass occupies residues 238–254; that stretch reads WFYQSAIIVILFALFAL. The Cytoplasmic segment spans residues 255–260; the sequence is EQKRLN. Residues 261-278 form a helical membrane-spanning segment; that stretch reads FMIIGILGSATLIFLILS. At 279–324 the chain is on the periplasmic side; sequence GGVDPILYQLKFYIFRNDESANLTQGFMYFNVNQTIQEVENVDFSE. Y291 is a binding site for [alpha-D-GalNAc-(1-&gt;4)]2-[beta-D-Glc-(1-&gt;3)]-[alpha-D-GalNAc-(1-&gt;4)]2-alpha-D-GalNAc-(1-&gt;3)-alpha-D-diNAcBac-tri-trans,hepta-cis-undecaprenyl diphosphate. A TIXE motif motif is present at residues 313-316; that stretch reads TIQE. Position 316 (E316) interacts with Mn(2+). The helical transmembrane segment at 325-347 threads the bilayer; sequence FMRRISGSEIVFLFSLFGFVWLL. Residues 348-352 are Cytoplasmic-facing; the sequence is RKHKS. The chain crosses the membrane as a helical span at residues 353–369; it reads MIMALPILVLGFLALKG. The Periplasmic portion of the chain corresponds to 370–373; that stretch reads GLRF. R372 lines the [alpha-D-GalNAc-(1-&gt;4)]2-[beta-D-Glc-(1-&gt;3)]-[alpha-D-GalNAc-(1-&gt;4)]2-alpha-D-GalNAc-(1-&gt;3)-alpha-D-diNAcBac-tri-trans,hepta-cis-undecaprenyl diphosphate pocket. The helical transmembrane segment at 374 to 396 threads the bilayer; it reads TIYSVPVMALGFGFLLSEFKAIL. Over 397-406 the chain is Cytoplasmic; the sequence is VKKYSQLTSN. Residues 407-427 traverse the membrane as a helical segment; that stretch reads VCIVFATILTLAPVFIHIYNY. At 428–713 the chain is on the periplasmic side; that stretch reads KAPTVFSQNE…RDAKVFKLKI (286 aa). Residues 457-459 form an interacts with target acceptor peptide in protein substrate region; the sequence is WWD. The WWDYG motif motif lies at 457 to 461; sequence WWDYG. [alpha-D-GalNAc-(1-&gt;4)]2-[beta-D-Glc-(1-&gt;3)]-[alpha-D-GalNAc-(1-&gt;4)]2-alpha-D-GalNAc-(1-&gt;3)-alpha-D-diNAcBac-tri-trans,hepta-cis-undecaprenyl diphosphate is bound at residue Y462. N534 carries N-linked (DATDGlc) asparagine glycosylation. Residues 568 to 575 carry the MI motif motif; the sequence is MSLIFSTV.

This sequence belongs to the STT3 family. It depends on Mg(2+) as a cofactor. The cofactor is Mn(2+).

It localises to the cell inner membrane. It catalyses the reaction tritrans,heptacis-undecaprenyl diphosphooligosaccharide + [protein]-L-asparagine = tritrans,heptacis-undecaprenyl diphosphate + a glycoprotein with the oligosaccharide chain attached by N-beta-D-glycosyl linkage to protein L-asparagine.. Its pathway is protein modification; protein glycosylation. Functionally, oligosaccharyltransferase that catalyzes the transfer of a preassembled heptasaccharide from a lipid donor to an asparagine residue in nascent polypeptide chains, affording a beta-linked glycan to the asparagine side chain of target proteins. Its function is as follows. Oligosaccharyl transferase (OST) that catalyzes the initial transfer of a defined glycan (GalNAc(2)GlcGalNAc(3)Bac(NAc)(2) in eubacteria, where Bac(NAc)(2) is di-N-acetyl bacillosamine) from the lipid carrier undecaprenol-pyrophosphate to an asparagine residue within an Asp/Glu-Asn-X-Ser/Thr consensus motif in nascent polypeptide chains, the first step in protein N-glycosylation. The chain is Undecaprenyl-diphosphooligosaccharide--protein glycotransferase (pglB) from Campylobacter jejuni (strain RM1221).